Reading from the N-terminus, the 527-residue chain is Sensory neuron membrane protein 1 (527 aa).

The Cytoplasmic portion of the chain corresponds to 1-10; the sequence is MQLQKPLKIG. A helical transmembrane segment spans residues 11-31; the sequence is LGMMGAGLFGIIFGWVLFPVI. Topologically, residues 32-456 are extracellular; the sequence is LKSQLKKEMA…LKNQLFIPKR (425 aa). 2 N-linked (GlcNAc...) asparagine glycosylation sites follow: Asn67 and Asn229. Disulfide bonds link Cys268–Cys333, Cys297–Cys352, and Cys335–Cys341. N-linked (GlcNAc...) asparagine glycosylation is present at Asn440. Residues 457–477 form a helical membrane-spanning segment; the sequence is IVSVVKWLLAGVGFVGLVGSL. Residues 478-527 lie on the Cytoplasmic side of the membrane; the sequence is VYQFKGKMINFALSPSSAPVTKVNPEINQQNQPKDISIIGESQNPPKVDM.

The protein belongs to the CD36 family. Principal component of the olfactory cilia membrane. Localizes to the antennal tissue with two to three fold higher expression in males compared to females.

The protein localises to the cell membrane. Its function is as follows. Plays an olfactory role that is not restricted to pheromone sensitivity. This is Sensory neuron membrane protein 1 from Ostrinia nubilalis (European corn borer).